A 300-amino-acid polypeptide reads, in one-letter code: Protease HtpX (300 aa).

Helical transmembrane passes span 4 to 24 and 40 to 60; these read ILLF…TLRL and SLLI…LFIS. Histidine 145 serves as a coordination point for Zn(2+). Glutamate 146 is a catalytic residue. Histidine 149 serves as a coordination point for Zn(2+). A run of 2 helical transmembrane segments spans residues 153–173 and 193–213; these read GDMV…MFFA and LGFF…GLVA. A Zn(2+)-binding site is contributed by glutamate 225.

This sequence belongs to the peptidase M48B family. Zn(2+) is required as a cofactor.

Its subcellular location is the cell inner membrane. The protein is Protease HtpX of Chromohalobacter salexigens (strain ATCC BAA-138 / DSM 3043 / CIP 106854 / NCIMB 13768 / 1H11).